The chain runs to 589 residues: Cytoplasmic polyadenylation element-binding protein 2 (589 aa).

2 disordered regions span residues 1–103 (MPPP…QAAA) and 118–140 (PLLK…SMSW). Over residues 24–33 (FFPSFSPVSP) the composition is skewed to low complexity. A compositionally biased stretch (gly residues) spans 44–53 (SGGGGGGFGG). Pro residues predominate over residues 60 to 81 (VPPPPPPAMNIPQQQPPPPAAP). Low complexity-rich tracts occupy residues 82-103 (QQPQ…QAAA) and 130-140 (SSGWGTGSMSW). Position 89 is a phosphoserine (serine 89). 2 consecutive RRM domains span residues 332–423 (RKVF…PWNL) and 440–522 (KTIF…PYVL).

This sequence belongs to the RRM CPEB family. As to quaternary structure, interacts with TENT2/GLD2.

It is found in the cytoplasm. Functionally, may play a role in translational regulation of stored mRNAs in transcriptionally inactive haploid spermatids. Binds to poly(U) RNA oligomers. Required for cell cycle progression, specifically for the transition from metaphase to anaphase. The sequence is that of Cytoplasmic polyadenylation element-binding protein 2 (CPEB2) from Homo sapiens (Human).